Reading from the N-terminus, the 69-residue chain is Protein transport protein Sec61 subunit gamma (69 aa).

Topologically, residues 1–32 (MDAVDSVVDPLREFAKDSVRLVKRCHKPDRKE) are cytoplasmic. The helical transmembrane segment at 33–61 (FTKVAARTAIGFVVMGFVGFFVKLIFIPI) threads the bilayer. At 62–69 (NNIIVGSG) the chain is on the extracellular side.

The protein belongs to the SecE/SEC61-gamma family. In terms of assembly, heterotrimeric complex composed of SEC61-alpha, SEC61-beta and SEC61-gamma.

The protein localises to the endoplasmic reticulum membrane. Necessary for protein translocation in the endoplasmic reticulum. The protein is Protein transport protein Sec61 subunit gamma of Oryza sativa subsp. japonica (Rice).